The sequence spans 54 residues: ATP synthase F(0) complex subunit 8 (54 aa).

The helical transmembrane segment at 8–24 (PWFSIMLLTWFTFSLLI) threads the bilayer.

It belongs to the ATPase protein 8 family. As to quaternary structure, component of the ATP synthase complex composed at least of ATP5F1A/subunit alpha, ATP5F1B/subunit beta, ATP5MC1/subunit c (homooctomer), MT-ATP6/subunit a, MT-ATP8/subunit 8, ATP5ME/subunit e, ATP5MF/subunit f, ATP5MG/subunit g, ATP5MK/subunit k, ATP5MJ/subunit j, ATP5F1C/subunit gamma, ATP5F1D/subunit delta, ATP5F1E/subunit epsilon, ATP5PF/subunit F6, ATP5PB/subunit b, ATP5PD/subunit d, ATP5PO/subunit OSCP. ATP synthase complex consists of a soluble F(1) head domain (subunits alpha(3) and beta(3)) - the catalytic core - and a membrane F(0) domain - the membrane proton channel (subunits c, a, 8, e, f, g, k and j). These two domains are linked by a central stalk (subunits gamma, delta, and epsilon) rotating inside the F1 region and a stationary peripheral stalk (subunits F6, b, d, and OSCP).

The protein localises to the mitochondrion membrane. Subunit 8, of the mitochondrial membrane ATP synthase complex (F(1)F(0) ATP synthase or Complex V) that produces ATP from ADP in the presence of a proton gradient across the membrane which is generated by electron transport complexes of the respiratory chain. ATP synthase complex consist of a soluble F(1) head domain - the catalytic core - and a membrane F(1) domain - the membrane proton channel. These two domains are linked by a central stalk rotating inside the F(1) region and a stationary peripheral stalk. During catalysis, ATP synthesis in the catalytic domain of F(1) is coupled via a rotary mechanism of the central stalk subunits to proton translocation. In vivo, can only synthesize ATP although its ATP hydrolase activity can be activated artificially in vitro. Part of the complex F(0) domain. This is ATP synthase F(0) complex subunit 8 from Gallus gallus (Chicken).